The sequence spans 356 residues: NADH dehydrogenase (ubiquinone) complex I, assembly factor 6 homolog (356 aa).

A mitochondrion-targeting transit peptide spans 1 to 41 (MIRNSGRILFNSLKNSNVKLINRNVIINSNIRLFSTSTNNT).

The protein belongs to the NDUFAF6 family.

The protein localises to the mitochondrion inner membrane. Involved in the assembly of mitochondrial NADH:ubiquinone oxidoreductase complex (complex I) at early stages. This Dictyostelium discoideum (Social amoeba) protein is NADH dehydrogenase (ubiquinone) complex I, assembly factor 6 homolog.